The sequence spans 508 residues: MSISRSLKIVATLYRYGLDDFLEGHSRLAFLHKLFGLCPVRRDTSAPLPQRVRLALESLGPIFVKFGQVLSTRRDLLPPEYADELALLQDRVPPFDGDIARQVVERSLGRKVEELFVDFDLKPVASASVAQVHKAWLRQPDGGRGREVAVKVLRPGILPVIEQDLSLMRTLAGWVEKLFADGKRLKPREVVAEFDKYLHDELDMMHEAANASQLRRNFKGSDMLIVPEVFYDYSSREVLTLEWMHGIPVGQIERLREAGVDLQKLSRFGVEIFFTQVFRHGFFHADMHPGNIFVAADGRYIALDFGIVGSLTDTDKHYLAVNFLAFFNRDYHRVATAHIESGWVPRDTRAEELEAAVRTVCEPIFEKPLSEISFGMVLLRLFETSRRFNVEIQPQLVLLQKTLLNIEGLGRQLDPELDLWDTAKPFLTKWMNEQIGWRGLLRTLKHEAPQWATTLPTLPRKLNEALGSAKTDLLVEGYIQLMREQKRQNFLLLLIAILLAALLAKSLL.

The Protein kinase domain maps to 118-494 (DFDLKPVASA…QKRQNFLLLL (377 aa)). Residues 124-132 (VASASVAQV) and Lys-151 each bind ATP. Asp-286 acts as the Proton acceptor in catalysis. A helical membrane pass occupies residues 488–508 (QNFLLLLIAILLAALLAKSLL).

It belongs to the ABC1 family. UbiB subfamily.

The protein localises to the cell inner membrane. It participates in cofactor biosynthesis; ubiquinone biosynthesis [regulation]. Functionally, is probably a protein kinase regulator of UbiI activity which is involved in aerobic coenzyme Q (ubiquinone) biosynthesis. This is Probable protein kinase UbiB from Chromobacterium violaceum (strain ATCC 12472 / DSM 30191 / JCM 1249 / CCUG 213 / NBRC 12614 / NCIMB 9131 / NCTC 9757 / MK).